We begin with the raw amino-acid sequence, 190 residues long: Large ribosomal subunit protein uL5 (190 aa).

This sequence belongs to the universal ribosomal protein uL5 family. In terms of assembly, part of the 50S ribosomal subunit; part of the 5S rRNA/L5/L18/L25 subcomplex. Contacts the 5S rRNA and the P site tRNA. Forms a bridge to the 30S subunit in the 70S ribosome.

Functionally, this is one of the proteins that bind and probably mediate the attachment of the 5S RNA into the large ribosomal subunit, where it forms part of the central protuberance. In the 70S ribosome it contacts protein S13 of the 30S subunit (bridge B1b), connecting the 2 subunits; this bridge is implicated in subunit movement. Contacts the P site tRNA; the 5S rRNA and some of its associated proteins might help stabilize positioning of ribosome-bound tRNAs. The polypeptide is Large ribosomal subunit protein uL5 (Bifidobacterium longum (strain DJO10A)).